Reading from the N-terminus, the 1029-residue chain is Putative B3 domain-containing protein Os03g0621600 (1029 aa).

DNA-binding regions (TF-B3) lie at residues 147–240 (DTYF…FDPS), 339–430 (VAVM…RKMK), and 450–543 (EKYF…FDPS). The tract at residues 572-605 (TSYHDQPKGNKHWMQKDSSSKGNKIGNTRSSNTP) is disordered. A compositionally biased stretch (polar residues) spans 591 to 605 (SKGNKIGNTRSSNTP). Positions 731 to 824 (YKNFFKVMIG…KLKVLIFGPS (94 aa)) form a DNA-binding region, TF-B3 4. A compositionally biased stretch (polar residues) spans 852 to 867 (SSNSHDLPVKSPQNVS). A disordered region spans residues 852-882 (SSNSHDLPVKSPQNVSKSEKQWDSSEQENDT). Positions 934–1029 (GCILRKSRVH…SMNVHIIPKK (96 aa)) form a DNA-binding region, TF-B3 5.

It localises to the nucleus. This Oryza sativa subsp. japonica (Rice) protein is Putative B3 domain-containing protein Os03g0621600.